The sequence spans 167 residues: Crossover junction endodeoxyribonuclease RuvC (167 aa).

Active-site residues include D8, E68, and D140. D8, E68, and D140 together coordinate Mg(2+).

This sequence belongs to the RuvC family. Homodimer which binds Holliday junction (HJ) DNA. The HJ becomes 2-fold symmetrical on binding to RuvC with unstacked arms; it has a different conformation from HJ DNA in complex with RuvA. In the full resolvosome a probable DNA-RuvA(4)-RuvB(12)-RuvC(2) complex forms which resolves the HJ. Mg(2+) is required as a cofactor.

Its subcellular location is the cytoplasm. The catalysed reaction is Endonucleolytic cleavage at a junction such as a reciprocal single-stranded crossover between two homologous DNA duplexes (Holliday junction).. In terms of biological role, the RuvA-RuvB-RuvC complex processes Holliday junction (HJ) DNA during genetic recombination and DNA repair. Endonuclease that resolves HJ intermediates. Cleaves cruciform DNA by making single-stranded nicks across the HJ at symmetrical positions within the homologous arms, yielding a 5'-phosphate and a 3'-hydroxyl group; requires a central core of homology in the junction. The consensus cleavage sequence is 5'-(A/T)TT(C/G)-3'. Cleavage occurs on the 3'-side of the TT dinucleotide at the point of strand exchange. HJ branch migration catalyzed by RuvA-RuvB allows RuvC to scan DNA until it finds its consensus sequence, where it cleaves and resolves the cruciform DNA. The protein is Crossover junction endodeoxyribonuclease RuvC of Sinorhizobium medicae (strain WSM419) (Ensifer medicae).